The sequence spans 549 residues: Probable protein kinase UbiB (549 aa).

In terms of domain architecture, Protein kinase spans 123–501; the sequence is DFNETPLASA…QQQAHKSNYL (379 aa). ATP contacts are provided by residues 129–137 and Lys152; that span reads LASASISQV. The active-site Proton acceptor is Asp287. A run of 2 helical transmembrane segments spans residues 498 to 518 and 520 to 540; these read SNYL…LFNQ and ATLW…IIGW.

The protein belongs to the ABC1 family. UbiB subfamily.

Its subcellular location is the cell inner membrane. It participates in cofactor biosynthesis; ubiquinone biosynthesis [regulation]. Functionally, is probably a protein kinase regulator of UbiI activity which is involved in aerobic coenzyme Q (ubiquinone) biosynthesis. The polypeptide is Probable protein kinase UbiB (Shewanella sp. (strain MR-4)).